The primary structure comprises 821 residues: MRSQTASKTSMKPSSNSSAFSVRSSVAVSSHSAMVELKQRILTSLSRLGDRDTYQIAVDDLEKIVVSVPDSPEILPVLLHCLFDSSSDLKAPVKRESIRLLSFLCLSYTDLSFSQLAKIISHIVKRLKDADNGVRDACRDAIGSLSAQFLKEKEVENGNYVGSSLVGLFAKPLFEAMAEQNKSLQSGAAICMGKMIDSATEPPVAAFQKLCPRISKLLNSPNYITKASLLPVVGSLSQVGAIAPQSLESLLHSIHECLGCTNWVTRKAAADVLISLAVHSSSLVADKTDSTLTALEACRFDKIKPVRESLSEALNVWKNIAGKGESGTMDDQKDVSSEQCILERNGETDSVSCEEAGLVMQGSCDGLSSSSDSISKAVLILRKKAPRLTGKDLNPEFFQKLEKRGSGDMPVEVILPSRQKNSSNSNTEDESDANTSVLRSRSNGLCRTAGVHTKQRHFGDFAREKWVDERMNGGESRLRAFDGDHTEVIQADTSENRGNWPPLQRQLLHLERQQTHIMNMLQDFMGGSHDGMISLENRVRGLERIVEEMSREMSIQSGARGKATASWRSDVDGWDSPNYGPSSRNTQTSTRKIRGTGPSEQSGNSRRAWDKSSVAIRLGEGPSARSVWQASKDEATLEAIRVAGEDCGTSRNRRVSIPEAEAMMDEDDDNRGGQQGDPIWTCWSNSVHALRVGDTDSAFAEVLSTGDDHLLVKLMDKTGPVLDQLSSDMGNEAIHSIAQFLLDHTLYDICLSWIQQLLEVSVENGADFMGIPLELKKELLLNLHEALSTTDPPEDWEGLAPDHLLVELASNWNIEIQHFDT.

HEAT repeat units follow at residues 69-110 (PDSP…SYTD), 114-151 (SQLAKIISHIVKRLKDADNGVRDACRDAIGSLSAQFLK), 163-201 (SSLVGLFAKPLFEAMAEQNKSLQSGAAICMGKMIDSATE), 205-242 (AAFQKLCPRISKLLNSPNYITKASLLPVVGSLSQVGAI), and 245-282 (QSLESLLHSIHECLGCTNWVTRKAAADVLISLAVHSSS). Ser-406 carries the post-translational modification Phosphoserine. Disordered regions lie at residues 416-437 (PSRQKNSSNSNTEDESDANTSV) and 553-610 (MSIQ…RAWD). A coiled-coil region spans residues 501–554 (PPLQRQLLHLERQQTHIMNMLQDFMGGSHDGMISLENRVRGLERIVEEMSREMS). Positions 579–590 (YGPSSRNTQTST) are enriched in polar residues.

Expressed at low levels in roots, hypocotyls, stems, flowers, siliques, cotyledons, and leaves. Particularly present in hydathodes of cotyledons and root hairs.

It localises to the cytoplasm. The protein localises to the cytoskeleton. Functionally, plant-specific microtubule-associated protein (MAP) that regulates the orientation of cortical microtubules and the direction of organ growth. In Arabidopsis thaliana (Mouse-ear cress), this protein is TORTIFOLIA1-like protein 1.